The following is a 248-amino-acid chain: 5'-nucleotidase SurE (248 aa).

The a divalent metal cation site is built by D8, D9, S39, and N92.

It belongs to the SurE nucleotidase family. Requires a divalent metal cation as cofactor.

It localises to the cytoplasm. The catalysed reaction is a ribonucleoside 5'-phosphate + H2O = a ribonucleoside + phosphate. Its function is as follows. Nucleotidase that shows phosphatase activity on nucleoside 5'-monophosphates. The polypeptide is 5'-nucleotidase SurE (Tolumonas auensis (strain DSM 9187 / NBRC 110442 / TA 4)).